The following is a 617-amino-acid chain: mRNA-decapping enzyme 1B (617 aa).

A2 is modified (N-acetylalanine). The residue at position 147 (S147) is a Phosphoserine. Position 191 is a phosphotyrosine (Y191). 2 disordered regions span residues 195 to 222 (NLIK…LDPE) and 243 to 266 (TVEP…KLPI). Over residues 205-219 (SENQQQRIPQPNQTL) the composition is skewed to polar residues. Positions 252–261 (QQQQQQQQQQ) are enriched in low complexity. A phosphoserine mark is found at S275 and S336. The tract at residues 362–426 (TPGAANKCDP…VGHQAHGREQ (65 aa)) is disordered. The segment covering 371-381 (PSTPAPASSAA) has biased composition (low complexity). T392 is modified (phosphothreonine). 2 positions are modified to phosphoserine: S448 and S511.

This sequence belongs to the DCP1 family. Interacts with DCP1A. As to quaternary structure, (Microbial infection) Interacts with rotavirus A non-structural protein 2; this interaction probably plays a role in the sequestration of DCP1B in viral factories. Interacts with rotavirus A non-structural protein 5; this interaction probably plays a role in its sequestration in viral factories.

It is found in the cytoplasm. The protein resides in the nucleus. The catalysed reaction is a 5'-end (N(7)-methyl 5'-triphosphoguanosine)-ribonucleoside in mRNA + H2O = N(7)-methyl-GDP + a 5'-end phospho-ribonucleoside in mRNA + 2 H(+). In terms of biological role, may play a role in the degradation of mRNAs, both in normal mRNA turnover and in nonsense-mediated mRNA decay. May remove the 7-methyl guanine cap structure from mRNA molecules, yielding a 5'-phosphorylated mRNA fragment and 7m-GDP. This Homo sapiens (Human) protein is mRNA-decapping enzyme 1B (DCP1B).